Reading from the N-terminus, the 343-residue chain is MNEITIIKPDDWHLHFRDQDMLLETVAATARCFERAVVMPNLVPPVTTAELALSYKERILAARPAGSTFMPVMTIYLTDKTSVQDIQDAKKAGVLAAKMYPAGATTNSDSGVNSLESLYPVFEALADNGMLLLIHGEVTQKHIDIFDREKEFIDQHMVNIVDRVPNLKVVFEHITTKDAVDFVLAARDGVAATITPQHLLLNRNDMLDGGVRPHNYCLPVLKRSTHQQALREVVKSGSPKFFLGTDSAPHAKHRKESDCGCAGCYSAWSALELYTQVFDELGALDKLEGFASLYGADFYGLPRNTEKVTLVRESWEVPNSITLPNGEPIVPFFAGKQISWKLK.

Zn(2+) is bound by residues His13 and His15. Substrate-binding positions include 15-17 (HFR) and Asn41. Residues Lys98, His135, and His173 each contribute to the Zn(2+) site. An N6-carboxylysine modification is found at Lys98. Residue His135 coordinates substrate. Leu218 provides a ligand contact to substrate. Residue Asp246 coordinates Zn(2+). Asp246 is an active-site residue. Substrate-binding residues include His250 and Ala262.

This sequence belongs to the metallo-dependent hydrolases superfamily. DHOase family. Class II DHOase subfamily. As to quaternary structure, homodimer. It depends on Zn(2+) as a cofactor.

The catalysed reaction is (S)-dihydroorotate + H2O = N-carbamoyl-L-aspartate + H(+). The protein operates within pyrimidine metabolism; UMP biosynthesis via de novo pathway; (S)-dihydroorotate from bicarbonate: step 3/3. Functionally, catalyzes the reversible cyclization of carbamoyl aspartate to dihydroorotate. In Marinomonas sp. (strain MWYL1), this protein is Dihydroorotase.